A 705-amino-acid chain; its full sequence is Polyribonucleotide nucleotidyltransferase (705 aa).

Asp486 and Asp492 together coordinate Mg(2+). In terms of domain architecture, KH spans 553–612; that stretch reads PRIYKIKINPEKIKDVIGKGGSVIRMLTEKTKSSIEIEDDGTVKVISTDIKNAQCALKKI. An S1 motif domain is found at 622-690; it reads NKIYVAKITR…RYGRIRLSFT (69 aa).

It belongs to the polyribonucleotide nucleotidyltransferase family. Component of the RNA degradosome, which is a multiprotein complex involved in RNA processing and mRNA degradation. Mg(2+) serves as cofactor.

It is found in the cytoplasm. The catalysed reaction is RNA(n+1) + phosphate = RNA(n) + a ribonucleoside 5'-diphosphate. Involved in mRNA degradation. Catalyzes the phosphorolysis of single-stranded polyribonucleotides processively in the 3'- to 5'-direction. The protein is Polyribonucleotide nucleotidyltransferase of Wigglesworthia glossinidia brevipalpis.